The sequence spans 101 residues: Small ribosomal subunit protein uS14 (101 aa).

This sequence belongs to the universal ribosomal protein uS14 family. As to quaternary structure, part of the 30S ribosomal subunit. Contacts proteins S3 and S10.

Functionally, binds 16S rRNA, required for the assembly of 30S particles and may also be responsible for determining the conformation of the 16S rRNA at the A site. The chain is Small ribosomal subunit protein uS14 from Neisseria gonorrhoeae (strain ATCC 700825 / FA 1090).